Reading from the N-terminus, the 23-residue chain is Chaperonin GroEL (23 aa).

Belongs to the chaperonin (HSP60) family. Forms a cylinder of 14 subunits composed of two heptameric rings stacked back-to-back. Interacts with the co-chaperonin GroES. In terms of processing, phosphorylated on threonine.

The protein localises to the cytoplasm. It catalyses the reaction ATP + H2O + a folded polypeptide = ADP + phosphate + an unfolded polypeptide.. Together with its co-chaperonin GroES, plays an essential role in assisting protein folding. The GroEL-GroES system forms a nano-cage that allows encapsulation of the non-native substrate proteins and provides a physical environment optimized to promote and accelerate protein folding. The chain is Chaperonin GroEL from Acidithiobacillus ferrooxidans (Thiobacillus ferrooxidans).